The following is a 252-amino-acid chain: Type III pantothenate kinase (252 aa).

6–13 (DMGNTRLK) serves as a coordination point for ATP. Residues Tyr-93 and 100-103 (GVDR) contribute to the substrate site. Asp-102 functions as the Proton acceptor in the catalytic mechanism. Thr-126 contacts ATP. Thr-179 contacts substrate.

The protein belongs to the type III pantothenate kinase family. In terms of assembly, homodimer. NH4(+) serves as cofactor. It depends on K(+) as a cofactor.

Its subcellular location is the cytoplasm. The catalysed reaction is (R)-pantothenate + ATP = (R)-4'-phosphopantothenate + ADP + H(+). Its pathway is cofactor biosynthesis; coenzyme A biosynthesis; CoA from (R)-pantothenate: step 1/5. Catalyzes the phosphorylation of pantothenate (Pan), the first step in CoA biosynthesis. In Cellvibrio japonicus (strain Ueda107) (Pseudomonas fluorescens subsp. cellulosa), this protein is Type III pantothenate kinase.